We begin with the raw amino-acid sequence, 37 residues long: Dolichyl-diphosphooligosaccharide--protein glycosyltransferase subunit 4B (37 aa).

Residues M1–G8 lie on the Lumenal side of the membrane. A helical transmembrane segment spans residues F9–M29. Residues A30–N37 are Cytoplasmic-facing.

Belongs to the OST4 family. Component of the oligosaccharyltransferase (OST) complex.

It localises to the endoplasmic reticulum membrane. Subunit of the oligosaccharyl transferase (OST) complex that catalyzes the initial transfer of a defined glycan (Glc(3)Man(9)GlcNAc(2) in eukaryotes) from the lipid carrier dolichol-pyrophosphate to an asparagine residue within an Asn-X-Ser/Thr consensus motif in nascent polypeptide chains, the first step in protein N-glycosylation. N-glycosylation occurs cotranslationally and the complex associates with the Sec61 complex at the channel-forming translocon complex that mediates protein translocation across the endoplasmic reticulum (ER). All subunits are required for a maximal enzyme activity. In Oryza sativa subsp. japonica (Rice), this protein is Dolichyl-diphosphooligosaccharide--protein glycosyltransferase subunit 4B (OST4B).